The primary structure comprises 433 residues: 23S rRNA (uracil(1939)-C(5))-methyltransferase RlmD (433 aa).

The region spanning 1 to 53 (MPVAVIESLDHEGRGVAHVDGKVVFVEGALAGEQVEYTVYRQRPSYDLAEATR) is the TRAM domain. Residues C66, C72, C75, and C154 each coordinate [4Fe-4S] cluster. 6 residues coordinate S-adenosyl-L-methionine: Q263, F292, N297, E313, N341, and D362. Catalysis depends on C389, which acts as the Nucleophile.

The protein belongs to the class I-like SAM-binding methyltransferase superfamily. RNA M5U methyltransferase family. RlmD subfamily.

The enzyme catalyses uridine(1939) in 23S rRNA + S-adenosyl-L-methionine = 5-methyluridine(1939) in 23S rRNA + S-adenosyl-L-homocysteine + H(+). Functionally, catalyzes the formation of 5-methyl-uridine at position 1939 (m5U1939) in 23S rRNA. The protein is 23S rRNA (uracil(1939)-C(5))-methyltransferase RlmD of Aromatoleum aromaticum (strain DSM 19018 / LMG 30748 / EbN1) (Azoarcus sp. (strain EbN1)).